The sequence spans 412 residues: Eukaryotic initiation factor 4A-1 (412 aa).

An N-acetylalanine modification is found at Ala-2. Residues 39–67 carry the Q motif motif; the sequence is ESFDAMGLQENLLRGIYAYGFEKPSAIQQ. In terms of domain architecture, Helicase ATP-binding spans 70-240; sequence IVPFCKGLDV…RKFMSKPVRI (171 aa). 83-90 contributes to the ATP binding site; it reads AQSGTGKT. Position 104 is a phosphoserine (Ser-104). Phosphothreonine is present on Thr-145. The DEAD box signature appears at 188–191; that stretch reads DEAD. The Helicase C-terminal domain occupies 251 to 412; it reads GIKQFYVNVE…ELPSNVADLL (162 aa).

The protein belongs to the DEAD box helicase family. eIF4A subfamily. In terms of assembly, eIF4F is a multi-subunit complex, the composition of which varies with external and internal environmental conditions. It is composed of at least EIF4A, EIF4E and EIF4G. Interacts with CDKA-1. Interacts with MRF1, MRF2, MRF3/ECIP1 and MRF4. As to expression, highly expressed in the whole plant.

It localises to the cytoplasm. The enzyme catalyses ATP + H2O = ADP + phosphate + H(+). Functionally, ATP-dependent RNA helicase which is a subunit of the eIF4F complex involved in cap recognition and is required for mRNA binding to ribosome. In the current model of translation initiation, eIF4A unwinds RNA secondary structures in the 5'-UTR of mRNAs which is necessary to allow efficient binding of the small ribosomal subunit, and subsequent scanning for the initiator codon. The sequence is that of Eukaryotic initiation factor 4A-1 from Arabidopsis thaliana (Mouse-ear cress).